Reading from the N-terminus, the 117-residue chain is Multidrug resistance protein EbrB (117 aa).

4 helical membrane-spanning segments follow: residues Gly-3–Leu-23, Trp-31–Leu-51, Ala-59–Phe-79, and Glu-81–Leu-101.

It belongs to the drug/metabolite transporter (DMT) superfamily. Small multidrug resistance (SMR) (TC 2.A.7.1) family. EbrA/EbrB subfamily. In terms of assembly, the efflux pump is composed of EbrA and EbrB.

Its subcellular location is the cell membrane. Its function is as follows. Part of a multidrug efflux pump. Confers resistance to cationic lipophilic dyes such as ethidium bromide, acriflavine, pyronine Y and safranin O. The efflux is probably coupled to an influx of protons. This is Multidrug resistance protein EbrB (ebrB) from Bacillus subtilis (strain 168).